We begin with the raw amino-acid sequence, 122 residues long: Large ribosomal subunit protein uL14 (122 aa).

It belongs to the universal ribosomal protein uL14 family. As to quaternary structure, part of the 50S ribosomal subunit. Forms a cluster with proteins L3 and L19. In the 70S ribosome, L14 and L19 interact and together make contacts with the 16S rRNA in bridges B5 and B8.

Its function is as follows. Binds to 23S rRNA. Forms part of two intersubunit bridges in the 70S ribosome. In Syntrophomonas wolfei subsp. wolfei (strain DSM 2245B / Goettingen), this protein is Large ribosomal subunit protein uL14.